Here is a 332-residue protein sequence, read N- to C-terminus: MTSYKALGLVNTKDLFAKAVKGGYAIPAYNFNNLEQLQAIIQACVETRSPVILQVSSGARKYANATLLRNMARGAVEYAHELGVDIPIVLHLDHGDSLELCIDCIESGFSSVMIDGSALPYDENVALSRKVCEYAHARADYVTVEGELGVLAGVEDDVVAEKSHYTMPDEVEDFVKKTGVDSLAISIGTSHGRAKFTPEQCTRNADGVLIPPPLRFDILAEIEKRIPGFPIVLHGASSVPVEYVREVERYGGNLPDSVGIPEEQLRKAAKSAVCKVNIDSDGRLAMTAAIRRVLTTKVDEFDPRKYLGPARDELKKLYMHKNKEVLGSAGRA.

Residue Ser-56 coordinates D-glyceraldehyde 3-phosphate. The active-site Proton donor is the Asp-93. Zn(2+) contacts are provided by His-94, Asp-115, Glu-147, and His-191. Gly-192 lines the dihydroxyacetone phosphate pocket. His-234 contacts Zn(2+). Residues 235 to 237 (GAS) and 277 to 280 (NIDS) each bind dihydroxyacetone phosphate.

This sequence belongs to the class II fructose-bisphosphate aldolase family. Homodimer. Zn(2+) is required as a cofactor.

The enzyme catalyses beta-D-fructose 1,6-bisphosphate = D-glyceraldehyde 3-phosphate + dihydroxyacetone phosphate. It participates in carbohydrate degradation; glycolysis; D-glyceraldehyde 3-phosphate and glycerone phosphate from D-glucose: step 4/4. In terms of biological role, catalyzes the aldol condensation of dihydroxyacetone phosphate (DHAP or glycerone-phosphate) with glyceraldehyde 3-phosphate (G3P) to form fructose 1,6-bisphosphate (FBP) in gluconeogenesis and the reverse reaction in glycolysis. The protein is Fructose-bisphosphate aldolase (fba) of Treponema pallidum (strain Nichols).